Here is a 207-residue protein sequence, read N- to C-terminus: Histidine biosynthesis bifunctional protein HisIE (207 aa).

Positions 1 to 117 (MQNFKELNEK…KISKNADFVF (117 aa)) are phosphoribosyl-AMP cyclohydrolase. Residues 118–207 (LARLEKLINA…ISKLKERHKA (90 aa)) are phosphoribosyl-ATP pyrophosphohydrolase.

This sequence in the N-terminal section; belongs to the PRA-CH family. The protein in the C-terminal section; belongs to the PRA-PH family.

Its subcellular location is the cytoplasm. The enzyme catalyses 1-(5-phospho-beta-D-ribosyl)-ATP + H2O = 1-(5-phospho-beta-D-ribosyl)-5'-AMP + diphosphate + H(+). It carries out the reaction 1-(5-phospho-beta-D-ribosyl)-5'-AMP + H2O = 1-(5-phospho-beta-D-ribosyl)-5-[(5-phospho-beta-D-ribosylamino)methylideneamino]imidazole-4-carboxamide. The protein operates within amino-acid biosynthesis; L-histidine biosynthesis; L-histidine from 5-phospho-alpha-D-ribose 1-diphosphate: step 2/9. Its pathway is amino-acid biosynthesis; L-histidine biosynthesis; L-histidine from 5-phospho-alpha-D-ribose 1-diphosphate: step 3/9. The sequence is that of Histidine biosynthesis bifunctional protein HisIE (hisI) from Campylobacter jejuni subsp. jejuni serotype O:2 (strain ATCC 700819 / NCTC 11168).